Reading from the N-terminus, the 448-residue chain is Argininosuccinate synthase (448 aa).

ATP is bound by residues 17–25 and alanine 43; that span reads AFSGGLDTS. An L-citrulline-binding site is contributed by tyrosine 99. ATP-binding residues include glycine 129 and threonine 131. The L-aspartate site is built by threonine 131, asparagine 135, and aspartate 136. Asparagine 135 is an L-citrulline binding site. Position 136 (aspartate 136) interacts with ATP. Positions 139 and 192 each coordinate L-citrulline. Aspartate 194 serves as a coordination point for ATP. 3 residues coordinate L-citrulline: threonine 201, glutamate 203, and glutamate 280.

The protein belongs to the argininosuccinate synthase family. Type 2 subfamily. As to quaternary structure, homotetramer.

The protein localises to the cytoplasm. It catalyses the reaction L-citrulline + L-aspartate + ATP = 2-(N(omega)-L-arginino)succinate + AMP + diphosphate + H(+). It functions in the pathway amino-acid biosynthesis; L-arginine biosynthesis; L-arginine from L-ornithine and carbamoyl phosphate: step 2/3. This is Argininosuccinate synthase from Enterobacter sp. (strain 638).